The sequence spans 488 residues: Protein nucleotidyltransferase YdiU (488 aa).

Residues glycine 90, glycine 92, arginine 93, lysine 113, aspartate 125, glycine 126, arginine 176, and arginine 183 each contribute to the ATP site. Aspartate 252 functions as the Proton acceptor in the catalytic mechanism. Mg(2+) contacts are provided by asparagine 253 and aspartate 262. Aspartate 262 contributes to the ATP binding site.

It belongs to the SELO family. It depends on Mg(2+) as a cofactor. Mn(2+) is required as a cofactor.

It catalyses the reaction L-seryl-[protein] + ATP = 3-O-(5'-adenylyl)-L-seryl-[protein] + diphosphate. The enzyme catalyses L-threonyl-[protein] + ATP = 3-O-(5'-adenylyl)-L-threonyl-[protein] + diphosphate. It carries out the reaction L-tyrosyl-[protein] + ATP = O-(5'-adenylyl)-L-tyrosyl-[protein] + diphosphate. The catalysed reaction is L-histidyl-[protein] + UTP = N(tele)-(5'-uridylyl)-L-histidyl-[protein] + diphosphate. It catalyses the reaction L-seryl-[protein] + UTP = O-(5'-uridylyl)-L-seryl-[protein] + diphosphate. The enzyme catalyses L-tyrosyl-[protein] + UTP = O-(5'-uridylyl)-L-tyrosyl-[protein] + diphosphate. In terms of biological role, nucleotidyltransferase involved in the post-translational modification of proteins. It can catalyze the addition of adenosine monophosphate (AMP) or uridine monophosphate (UMP) to a protein, resulting in modifications known as AMPylation and UMPylation. This Thiobacillus denitrificans (strain ATCC 25259 / T1) protein is Protein nucleotidyltransferase YdiU.